The sequence spans 291 residues: tRNA dimethylallyltransferase (291 aa).

Position 8-15 (8-15) interacts with ATP; it reads GSTASGKT. Position 10–15 (10–15) interacts with substrate; that stretch reads TASGKT. Residues 33–36 are interaction with substrate tRNA; the sequence is DSLC.

This sequence belongs to the IPP transferase family. As to quaternary structure, monomer. The cofactor is Mg(2+).

It catalyses the reaction adenosine(37) in tRNA + dimethylallyl diphosphate = N(6)-dimethylallyladenosine(37) in tRNA + diphosphate. In terms of biological role, catalyzes the transfer of a dimethylallyl group onto the adenine at position 37 in tRNAs that read codons beginning with uridine, leading to the formation of N6-(dimethylallyl)adenosine (i(6)A). This chain is tRNA dimethylallyltransferase, found in Aliarcobacter butzleri (strain RM4018) (Arcobacter butzleri).